A 297-amino-acid chain; its full sequence is Ribosomal RNA small subunit methyltransferase H (297 aa).

S-adenosyl-L-methionine is bound by residues 37-39 (GGH), D56, F87, D102, and H109.

This sequence belongs to the methyltransferase superfamily. RsmH family.

It is found in the cytoplasm. The catalysed reaction is cytidine(1402) in 16S rRNA + S-adenosyl-L-methionine = N(4)-methylcytidine(1402) in 16S rRNA + S-adenosyl-L-homocysteine + H(+). Specifically methylates the N4 position of cytidine in position 1402 (C1402) of 16S rRNA. The chain is Ribosomal RNA small subunit methyltransferase H from Borrelia turicatae (strain 91E135).